We begin with the raw amino-acid sequence, 443 residues long: Trigger factor (443 aa).

Residues 163-248 (GDTAVIDFEG…INEIKAKELP (86 aa)) form the PPIase FKBP-type domain.

The protein belongs to the FKBP-type PPIase family. Tig subfamily.

Its subcellular location is the cytoplasm. It carries out the reaction [protein]-peptidylproline (omega=180) = [protein]-peptidylproline (omega=0). Involved in protein export. Acts as a chaperone by maintaining the newly synthesized protein in an open conformation. Functions as a peptidyl-prolyl cis-trans isomerase. The protein is Trigger factor of Agathobacter rectalis (strain ATCC 33656 / DSM 3377 / JCM 17463 / KCTC 5835 / VPI 0990) (Eubacterium rectale).